A 161-amino-acid chain; its full sequence is Phosphopantetheine adenylyltransferase (161 aa).

Thr-9 lines the substrate pocket. Residues Thr-9 to Phe-10 and His-17 each bind ATP. Substrate contacts are provided by Lys-41, Leu-73, and Arg-87. ATP-binding positions include Gly-88–Arg-90, Glu-98, and Tyr-123–Thr-129.

The protein belongs to the bacterial CoaD family. As to quaternary structure, homohexamer. It depends on Mg(2+) as a cofactor.

It is found in the cytoplasm. It catalyses the reaction (R)-4'-phosphopantetheine + ATP + H(+) = 3'-dephospho-CoA + diphosphate. It functions in the pathway cofactor biosynthesis; coenzyme A biosynthesis; CoA from (R)-pantothenate: step 4/5. In terms of biological role, reversibly transfers an adenylyl group from ATP to 4'-phosphopantetheine, yielding dephospho-CoA (dPCoA) and pyrophosphate. The chain is Phosphopantetheine adenylyltransferase from Cupriavidus taiwanensis (strain DSM 17343 / BCRC 17206 / CCUG 44338 / CIP 107171 / LMG 19424 / R1) (Ralstonia taiwanensis (strain LMG 19424)).